The primary structure comprises 488 residues: Argininosuccinate lyase 2 (488 aa).

Belongs to the lyase 1 family. Argininosuccinate lyase subfamily.

It is found in the cytoplasm. It carries out the reaction 2-(N(omega)-L-arginino)succinate = fumarate + L-arginine. The protein operates within amino-acid biosynthesis; L-arginine biosynthesis; L-arginine from L-ornithine and carbamoyl phosphate: step 3/3. The sequence is that of Argininosuccinate lyase 2 from Rhizobium meliloti (strain 1021) (Ensifer meliloti).